A 128-amino-acid polypeptide reads, in one-letter code: uncharacterized protein (128 aa).

The helical transmembrane segment at 8 to 28 (YQAIYLIFAGFTVFGLLLHFY) threads the bilayer.

Its subcellular location is the membrane. This is an uncharacterized protein from Haemophilus influenzae (strain ATCC 51907 / DSM 11121 / KW20 / Rd).